Here is a 408-residue protein sequence, read N- to C-terminus: DRPRPARLSHARFSKNHSGRTHSMKDKAGRKHRPLDVFDFPDHSQLSSFSRLGENEKDEESYETFDPPLHSTAIYADEEEFSKQCGSHLPSTPQEKEAKRSSDTSEIEASENESVKISAKKPRRKLKPISDESESPEESDVRRKVKPTENISTQHEAVSATALPGLSEKPAEAVTPQKTGPQSAESSAEKATLATEHQLETQKNKMLPGKRKKPRSYTTDTSDCAPVWCLKEKKASEIMELDVFLSAFENILLEYEQKIDSRVCKAAINKFHSNLKEELIKMVQEIQMLKTLKRKNAKIISNIEKKRQRLIEVQDELLQVEPELKQLQIKYEELQERKASLRKAAYFLSNLKQLHQDYSDVQEEEPSVKETYDSSSLPALLFKARPLLGAEHHLQNINYQLENLLDQK.

Over residues 1–33 the composition is skewed to basic residues; it reads DRPRPARLSHARFSKNHSGRTHSMKDKAGRKHR. The tract at residues 1–218 is disordered; the sequence is DRPRPARLSH…GKRKKPRSYT (218 aa). T72 is modified (phosphothreonine; by PLK1). A Phosphothreonine modification is found at T92. Over residues 94–103 the composition is skewed to basic and acidic residues; sequence QEKEAKRSSD. The residue at position 102 (S102) is a Phosphoserine. T104 bears the Phosphothreonine mark. S105, S110, and S114 each carry phosphoserine. Residues 118–127 are compositionally biased toward basic residues; that stretch reads SAKKPRRKLK. A phosphoserine mark is found at S130, S133, and S135. Residues 176–186 are compositionally biased toward polar residues; sequence PQKTGPQSAES. K178 is covalently cross-linked (Glycyl lysine isopeptide (Lys-Gly) (interchain with G-Cter in SUMO2)). Residues S183 and S187 each carry the phosphoserine modification. T192 carries the phosphothreonine modification. At S222 the chain carries Phosphoserine. Residues 273–350 adopt a coiled-coil conformation; it reads SNLKEELIKM…LRKAAYFLSN (78 aa). The short motif at 293–310 is the Nuclear localization signal element; sequence KRKNAKIISNIEKKRQRL.

The protein belongs to the CENP-U/AME1 family. As to quaternary structure, component of the CENPA-NAC complex, at least composed of CENPA, CENPC, CENPH, CENPM, CENPN, CENPT and CENPU. The CENPA-NAC complex interacts with the CENPA-CAD complex, composed of CENPI, CENPK, CENPL, CENPO, CENPP, CENPQ, CENPR and CENPS. Interacts with MLF1. Post-translationally, phosphorylated by PLK1 at Thr-72, creating a self-tethering site that specifically interacts with the polo-box domain of PLK1.

Its subcellular location is the cytoplasm. It localises to the nucleus. The protein localises to the chromosome. The protein resides in the centromere. It is found in the kinetochore. Functionally, component of the CENPA-NAC (nucleosome-associated) complex, a complex that plays a central role in assembly of kinetochore proteins, mitotic progression and chromosome segregation. The CENPA-NAC complex recruits the CENPA-CAD (nucleosome distal) complex and may be involved in incorporation of newly synthesized CENPA into centromeres. Plays an important role in the correct PLK1 localization to the mitotic kinetochores. A scaffold protein responsible for the initial recruitment and maintenance of the kinetochore PLK1 population until its degradation. Involved in transcriptional repression. The chain is Centromere protein U (CENPU) from Bos taurus (Bovine).